Here is a 158-residue protein sequence, read N- to C-terminus: Transcription elongation factor GreA (158 aa).

Positions 3–75 form a coiled coil; it reads TEKTYPMTQE…TQLENMIRNA (73 aa).

Belongs to the GreA/GreB family.

Its function is as follows. Necessary for efficient RNA polymerase transcription elongation past template-encoded arresting sites. The arresting sites in DNA have the property of trapping a certain fraction of elongating RNA polymerases that pass through, resulting in locked ternary complexes. Cleavage of the nascent transcript by cleavage factors such as GreA or GreB allows the resumption of elongation from the new 3'terminus. GreA releases sequences of 2 to 3 nucleotides. The polypeptide is Transcription elongation factor GreA (Bacillus cereus (strain ATCC 14579 / DSM 31 / CCUG 7414 / JCM 2152 / NBRC 15305 / NCIMB 9373 / NCTC 2599 / NRRL B-3711)).